The following is a 249-amino-acid chain: Proline-rich antigen (249 aa).

Composition is skewed to pro residues over residues 1–20 and 38–87; these read MTDQPPPSGSNPTPAPPPPG and YPPP…PPGP. The disordered stretch occupies residues 1–87; the sequence is MTDQPPPSGS…GAYAPPPPGP (87 aa). A 1-1; approximate repeat occupies 34-43; it reads LGSAYPPPTA. The segment at 34 to 85 is 5 X 10 AA tandem repeats of [PV]-G-G-S-Y-P-P-P-P-P; it reads LGSAYPPPTAPPVGGSYPPPPPPGGSYPPPPPPGGSYPPPPPSTGAYAPPPP. A run of 3 repeats spans residues 46–55, 56–65, and 66–75. The stretch at 76–85 is one 1-5; approximate repeat; the sequence is STGAYAPPPP. One can recognise an RDD domain in the interval 99-242; that stretch reads FWVTRVLAYV…KRQTLADKIM (144 aa). 2 repeat units span residues 101–123 and 134–156. The segment at 101–156 is 2 X 23 AA approximate repeats; that stretch reads VTRVLAYVIDNIPATVLLGIGMLIQTLTKQEACVTDITQYNVNQYCATQPTGIGML. 3 helical membrane passes run 104-124, 151-171, and 212-232; these read VLAYVIDNIPATVLLGIGMLI, TGIGMLAFWFAWLMATAYLVW, and LAHFVDAVICCIGFLFPLWDS.

It belongs to the mycobacterial Pra family.

Its subcellular location is the cell membrane. The sequence is that of Proline-rich antigen (ag36) from Mycobacterium leprae (strain TN).